The following is a 219-amino-acid chain: 2-C-methyl-D-erythritol 4-phosphate cytidylyltransferase (219 aa).

It belongs to the IspD/TarI cytidylyltransferase family. IspD subfamily.

The enzyme catalyses 2-C-methyl-D-erythritol 4-phosphate + CTP + H(+) = 4-CDP-2-C-methyl-D-erythritol + diphosphate. Its pathway is isoprenoid biosynthesis; isopentenyl diphosphate biosynthesis via DXP pathway; isopentenyl diphosphate from 1-deoxy-D-xylulose 5-phosphate: step 2/6. In terms of biological role, catalyzes the formation of 4-diphosphocytidyl-2-C-methyl-D-erythritol from CTP and 2-C-methyl-D-erythritol 4-phosphate (MEP). In Endomicrobium trichonymphae, this protein is 2-C-methyl-D-erythritol 4-phosphate cytidylyltransferase.